Consider the following 185-residue polypeptide: Avirulence protein ATR39-1 (185 aa).

Residues 1–20 (MVKCTPLLALTVIVSAGSDA) form the signal peptide. Residues 49–66 (RVLRASDVPDEVAAGESR) carry the RxLR-dEER motif.

The protein belongs to the RxLR effector family.

The protein resides in the secreted. The protein localises to the host cell. Secreted effector that acts as an elicitor of hypersensitive response (HR) specifically on plants carrying defense protein RPP39. The allele ATR39-1 is recognized by RPP39, whereas the ATR39-2 allele is not recognized. In Hyaloperonospora arabidopsidis (strain Emoy2) (Downy mildew agent), this protein is Avirulence protein ATR39-1.